A 238-amino-acid chain; its full sequence is Sugar fermentation stimulation protein homolog (238 aa).

Belongs to the SfsA family.

The protein is Sugar fermentation stimulation protein homolog of Vibrio parahaemolyticus serotype O3:K6 (strain RIMD 2210633).